We begin with the raw amino-acid sequence, 335 residues long: 34 kDa spicule matrix protein (335 aa).

The signal sequence occupies residues 1 to 17; it reads MKGLLLILASLVAIATG. The region spanning 29-194 is the C-type lectin domain; the sequence is SGASCYRYFN…ATAMRAFVCE (166 aa). An intrachain disulfide couples C50 to C193. Positions 199–335 are disordered; sequence QNIPPGQQPG…QEAETDVTGS (137 aa). Positions 207 to 310 are enriched in gly residues; sequence PGFGGQQPGF…GGPQRPGMGG (104 aa). Residues 311–323 show a composition bias toward low complexity; it reads QPNSPNPRFNRPR.

Belongs to the SM50 family. In terms of tissue distribution, embryo spicule.

The protein resides in the secreted. Major matrix protein of the sea urchin embryo spicule which directs crystal growth in certain orientations and inhibit growth in others. This Lytechinus pictus (Painted sea urchin) protein is 34 kDa spicule matrix protein.